The sequence spans 229 residues: MELLLLSNSTLPGKAWLEHALPLMANQLNGRRSAVFIPFAGVTQTWDEYTDKTAEVLTPLGINVTGIHRIAAPLEAIEKSEIIIVGGGNTFQLLKESRERGLLAPIADRVKRGALYIGWSAGANLACPTIRTTNDMPIVDPNGFDALGLFPLQINPHFTNALPEGHKGETREQRIRELLVVAPELTVIGLPEGNWIQVSNGQAVLGGPNTTWVFKAGEEAVALEAGHRF.

Catalysis depends on charge relay system residues S120, D135, and H157.

It belongs to the peptidase S51 family.

The protein resides in the cytoplasm. The enzyme catalyses Dipeptidase E catalyzes the hydrolysis of dipeptides Asp-|-Xaa. It does not act on peptides with N-terminal Glu, Asn or Gln, nor does it cleave isoaspartyl peptides.. Hydrolyzes dipeptides containing N-terminal aspartate residues. May play a role in allowing the cell to use peptide aspartate to spare carbon otherwise required for the synthesis of the aspartate family of amino acids. The polypeptide is Peptidase E (Salmonella arizonae (strain ATCC BAA-731 / CDC346-86 / RSK2980)).